The sequence spans 404 residues: 11-beta-hydroxysteroid dehydrogenase type 2 (404 aa).

82–111 (TRAVLITGCDSGFGNATAKKLDTMGFTVLA) is a binding site for NAD(+). Ser-219 contributes to the substrate binding site. The Proton acceptor role is filled by Tyr-232. Residues 383 to 404 (LTSARDIAQDQGPRPDPSPTAQ) form a disordered region.

The protein belongs to the short-chain dehydrogenases/reductases (SDR) family. Interacts with ligand-free cytoplasmic NR3C2. As to expression, highly expressed in kidney, adrenal and colon; detected at lower levels on lung, liver, and spleen. Expressed in oocytes. Expressed in uterine tissues and in corpora lutea.

The protein localises to the microsome. Its subcellular location is the endoplasmic reticulum. It catalyses the reaction an 11beta-hydroxysteroid + NAD(+) = an 11-oxosteroid + NADH + H(+). It carries out the reaction corticosterone + NAD(+) = 11-dehydrocorticosterone + NADH + H(+). The enzyme catalyses cortisol + NAD(+) = cortisone + NADH + H(+). The catalysed reaction is 11beta,17beta-dihydroxyandrost-4-ene-3-one + NAD(+) = 17beta-hydroxyandrost-4-ene-3,11-dione + NADH + H(+). It catalyses the reaction 11beta-hydroxyandrost-4-ene-3,17-dione + NAD(+) = androst-4-ene-3,11,17-trione + NADH + H(+). It participates in steroid metabolism. With respect to regulation, inhibited by glycyrrhetinic acid, carbenoloxone, 11-alpha-OH-progesterone and 11-beta-OH-progesterone. Catalyzes the conversion of biologically active 11beta-hydroxyglucocorticoids (11beta-hydroxysteroid) such as cortisol, to inactive 11-ketoglucocorticoids (11-oxosteroid) such as cortisone, in the presence of NAD(+). Functions as a dehydrogenase (oxidase), thereby decreasing the concentration of active glucocorticoids, thus protecting the nonselective mineralocorticoid receptor from occupation by glucocorticoids. Affinity towards corticosterone is higher than cortisol or dexamethasone. Plays an important role in maintaining glucocorticoids balance during preimplantation and protects the fetus from excessive maternal corticosterone exposure. Catalyzes the oxidation of 11beta-hydroxytestosterone (11beta,17beta-dihydroxyandrost-4-ene-3-one) to 11-ketotestosterone (17beta-hydroxyandrost-4-ene-3,11-dione), a major bioactive androgen. Catalyzes the conversion of 11beta-hydroxyandrostenedione (11beta-hydroxyandrost-4-ene-3,17-dione) to 11-ketoandrostenedione (androst-4-ene-3,11,17-trione), which can be further metabolized to 11-ketotestosterone. Converts 7-beta-25-dihydroxycholesterol to 7-oxo-25-hydroxycholesterol in vitro. 7-beta-25-dihydroxycholesterol (not 7-oxo-25-hydroxycholesterol) acts as ligand for the G-protein-coupled receptor (GPCR) Epstein-Barr virus-induced gene 2 (EBI2) and may thereby regulate immune cell migration. May protect ovulating oocytes and fertilizing spermatozoa from the adverse effects of cortisol. The chain is 11-beta-hydroxysteroid dehydrogenase type 2 (HSD11B2) from Bos taurus (Bovine).